We begin with the raw amino-acid sequence, 375 residues long: 4,4'-diaponeurosporenoate glycosyltransferase (375 aa).

The next 4 helical transmembrane spans lie at 3–23 (WLSR…ALIF), 164–184 (FYEG…NVFS), 277–297 (IMTA…GLCL), and 330–350 (FSNL…KIFI).

The protein belongs to the glycosyltransferase 2 family. CrtQ subfamily.

The protein localises to the cell membrane. Its pathway is carotenoid biosynthesis; staphyloxanthin biosynthesis; staphyloxanthin from farnesyl diphosphate: step 4/5. Its function is as follows. Catalyzes the glycosylation of 4,4'-diaponeurosporenoate, i.e. the esterification of glucose at the C1'' position with the carboxyl group of 4,4'-diaponeurosporenic acid, to form glycosyl-4,4'-diaponeurosporenoate. This is a step in the biosynthesis of staphyloxanthin, an orange pigment present in most staphylococci strains. This Staphylococcus aureus (strain USA300) protein is 4,4'-diaponeurosporenoate glycosyltransferase (crtQ).